The following is a 486-amino-acid chain: Glutamyl-tRNA(Gln) amidotransferase subunit A (486 aa).

Residues K74 and S149 each act as charge relay system in the active site. The active-site Acyl-ester intermediate is S173.

The protein belongs to the amidase family. GatA subfamily. Heterotrimer of A, B and C subunits.

The catalysed reaction is L-glutamyl-tRNA(Gln) + L-glutamine + ATP + H2O = L-glutaminyl-tRNA(Gln) + L-glutamate + ADP + phosphate + H(+). Functionally, allows the formation of correctly charged Gln-tRNA(Gln) through the transamidation of misacylated Glu-tRNA(Gln) in organisms which lack glutaminyl-tRNA synthetase. The reaction takes place in the presence of glutamine and ATP through an activated gamma-phospho-Glu-tRNA(Gln). This Prochlorococcus marinus (strain SARG / CCMP1375 / SS120) protein is Glutamyl-tRNA(Gln) amidotransferase subunit A.